Here is a 133-residue protein sequence, read N- to C-terminus: Profilin-2 (133 aa).

An intrachain disulfide couples Cys-13 to Cys-117. Residues 83 to 99 (AVIRGKKGSGGITIKKT) carry the Involved in PIP2 interaction motif. Position 113 is a phosphothreonine (Thr-113).

This sequence belongs to the profilin family. Occurs in many kinds of cells as a complex with monomeric actin in a 1:1 ratio. Phosphorylated by MAP kinases.

It localises to the cytoplasm. The protein resides in the cytoskeleton. Binds to actin and affects the structure of the cytoskeleton. At high concentrations, profilin prevents the polymerization of actin, whereas it enhances it at low concentrations. The protein is Profilin-2 of Betula pendula (European white birch).